The sequence spans 84 residues: U21-theraphotoxin-Cg1a 1 (84 aa).

Positions 1–21 are cleaved as a signal peptide; that stretch reads MKVSVLITLAVLGVMFLLTSA. The propeptide occupies 22–47; it reads EERGSDQMDSPAWLKSMEIIFQSEER. 3 disulfides stabilise this stretch: Cys-49-Cys-63, Cys-56-Cys-68, and Cys-62-Cys-76. Val-82 bears the Valine amide mark.

This sequence belongs to the neurotoxin 10 (Hwtx-1) family. 05 (F4a) subfamily. As to expression, expressed by the venom gland.

It is found in the secreted. In terms of biological role, probable ion channel inhibitor. This is U21-theraphotoxin-Cg1a 1 from Chilobrachys guangxiensis (Chinese earth tiger tarantula).